Here is a 902-residue protein sequence, read N- to C-terminus: Respiratory burst oxidase homolog protein A (902 aa).

The Cytoplasmic portion of the chain corresponds to 1 to 344 (MMNRSEMQKL…KYFLFDNWKR (344 aa)). Disordered regions lie at residues 63-87 (KSPNHRGAGSNYEDQSLLRQGRSGR) and 107-130 (ASSVSSSSARKPPRPQLAKLRRSK). Residues 74 to 87 (YEDQSLLRQGRSGR) show a composition bias toward polar residues. The span at 107 to 116 (ASSVSSSSAR) shows a compositional bias: low complexity. EF-hand-like stretches follow at residues 163–173 (TMTTNGLLHRS) and 198–209 (ENVSGDSININE). EF-hand domains follow at residues 221-256 (DFDSRLRTFFAMVDKDSDGRLNEAEVREIITLSASA) and 265-300 (QADEYAALIMEELDPYHYGYIMIENLEILLLQAPMQ). Ca(2+)-binding residues include Asp-234, Asp-236, Asp-238, Arg-240, and Glu-245. 2 positions are modified to phosphoserine: Ser-311 and Ser-315. Residues 345–365 (VWVMALWIGAMAGLFTWKFME) traverse the membrane as a helical segment. Topologically, residues 366–380 (YRKRSAYEVMGVCVC) are extracellular. The chain crosses the membrane as a helical span at residues 381 to 401 (IAKGAAETLKLNMAMILLPVC). Positions 383 to 540 (KGAAETLKLN…LFVIVYSLLV (158 aa)) constitute a Ferric oxidoreductase domain. The Cytoplasmic segment spans residues 402 to 428 (RNTITWLRTKTKLSAIVPFDDSLNFHK). The helical transmembrane segment at 429-449 (VIAIGISVGVGIHATSHLACD) threads the bilayer. Residues 450–484 (FPRLIAADEDQYEPMEKYFGPQTKRYLDFVQSVEG) are Extracellular-facing. The helical transmembrane segment at 485–505 (VTGIGMVVLMTIAFTLATTWF) threads the bilayer. Topologically, residues 506–529 (RRNKLNLPGPLKKITGFNAFWYSH) are cytoplasmic. A helical membrane pass occupies residues 530-550 (HLFVIVYSLLVVHGFYVYLII). Residues 551-709 (EPWYKKTTWM…PAQDYKKFEV (159 aa)) are Extracellular-facing. Positions 575 to 703 (IRAFRSSVEA…DGPYGAPAQD (129 aa)) constitute an FAD-binding FR-type domain. A helical transmembrane segment spans residues 710 to 730 (VLLVGLGIGATPMISIVSDII). Residues 731 to 902 (NNLKGVEEGS…TKFIFHKENF (172 aa)) lie on the Cytoplasmic side of the membrane. The interval 738 to 760 (EGSNRRQSPIHNMVTPPVSPSRK) is disordered.

The protein belongs to the RBOH (TC 5.B.1.3) family. In terms of assembly, monomer and homodimer.

The protein localises to the membrane. In terms of biological role, calcium-dependent NADPH oxidase that generates superoxide. The chain is Respiratory burst oxidase homolog protein A (RBOHA) from Arabidopsis thaliana (Mouse-ear cress).